The following is an 809-amino-acid chain: MKGTPQYHFIGIGGIGMSALAHILLDRGYEVSGSDLYESYTIESLKAKGARCFSGHDSSHVPHDAVVVYSSSIAPDNVEYLTAIQRSSRLLHRAELLSQLMEGYESILVSGSHGKTGTSSLIRAIFQEAQKDPSYAIGGLAANCLNGYSGSSKIFVAEADESDGSLKHYTPRAVVITNIDNEHLNNYAGNLDNLVQVIQDFSRKVTDLNKVFYNGDCPILKGNVQGISYGYSPECQLHIVSYNQKAWQSHFSFTFLGQEYQDIELNLPGQHNAANAAAACGVALTFGIDINIIRKALKKFSGVHRRLERKNISESFLFLEDYAHHPVEVAHTLRSVRDAVGLRRVIAIFQPHRFSRLEECLQTFPKAFQEADEVILTDVYSAGESPRESIILSDLAEQIRKSSYVHCCYVPHGDIVDYLRNYIRIHDVCVSLGAGNIYTIGEALKDFNPKKLSIGLVCGGKSCEHDISLLSAQHVSKYISPEFYDVSYFIINRQGLWRTGKDFPHLIEETQGDSPLSSEIASALAKVDCLFPVLHGPFGEDGTIQGFFEILGKPYAGPSLSLAATAMDKLLTKRIASAVGVPVVPYQPLNLCFWKRNPELCIQNLIETFSFPMIVKTAHLGSSIGIFLVRDKEELQEKISEAFLYDTDVFVEESRLGSREIEVSCIGHSSSWYCMAGPNERCGASGFIDYQEKYGFDGIDCAKISFDLQLSQESLDCVRELAERVYRAMQGKGSARIDFFLDEEGNYWLSEVNPIPGMTAASPFLQAFVHAGWTQEQIVDHFIIDALHKFDKQQTIEQAFTKEQDLVKR.

Positions 1–450 (MKGTPQYHFI…GEALKDFNPK (450 aa)) are UDP-N-acetylmuramate--alanine ligase. ATP-binding positions include 111–117 (GSHGKTG) and 606–661 (IETF…SREI). Residues 451 to 809 (KLSIGLVCGG…FTKEQDLVKR (359 aa)) are D-alanine--D-alanine ligase. An ATP-grasp domain is found at 573-784 (KRIASAVGVP…QEQIVDHFII (212 aa)). Residues Asp-738, Glu-751, and Asn-753 each coordinate Mg(2+).

It in the N-terminal section; belongs to the MurCDEF family. This sequence in the C-terminal section; belongs to the D-alanine--D-alanine ligase family. Requires Mg(2+) as cofactor. Mn(2+) serves as cofactor.

The protein localises to the cytoplasm. It catalyses the reaction UDP-N-acetyl-alpha-D-muramate + L-alanine + ATP = UDP-N-acetyl-alpha-D-muramoyl-L-alanine + ADP + phosphate + H(+). The enzyme catalyses 2 D-alanine + ATP = D-alanyl-D-alanine + ADP + phosphate + H(+). It functions in the pathway cell wall biogenesis; peptidoglycan biosynthesis. Its function is as follows. Cell wall formation. The chain is Bifunctional enzyme MurC/Ddl (murC/ddl) from Chlamydia pneumoniae (Chlamydophila pneumoniae).